A 551-amino-acid polypeptide reads, in one-letter code: RanBD1 domain-containing protein C584.03c (551 aa).

The region spanning 1-309 (MDELLNVASH…LLLKYADDET (309 aa)) is the RanBD1 domain. Ser441 is modified (phosphoserine). Residues 522 to 551 (SVIPHSEPESSSKVINCQAKLNVEKEKKNP) are disordered.

It is found in the nucleus. The sequence is that of RanBD1 domain-containing protein C584.03c from Schizosaccharomyces pombe (strain 972 / ATCC 24843) (Fission yeast).